The following is a 635-amino-acid chain: Biosynthetic arginine decarboxylase (635 aa).

K100 bears the N6-(pyridoxal phosphate)lysine mark. Residue L282 to Y292 participates in substrate binding.

Belongs to the Orn/Lys/Arg decarboxylase class-II family. SpeA subfamily. Requires Mg(2+) as cofactor. Pyridoxal 5'-phosphate is required as a cofactor.

The enzyme catalyses L-arginine + H(+) = agmatine + CO2. Its pathway is amine and polyamine biosynthesis; agmatine biosynthesis; agmatine from L-arginine: step 1/1. Functionally, catalyzes the biosynthesis of agmatine from arginine. The chain is Biosynthetic arginine decarboxylase from Geobacter sp. (strain M21).